Reading from the N-terminus, the 148-residue chain is F-box protein At3g55900 (148 aa).

Residues 9–59 enclose the F-box domain; the sequence is CRNLSELPQELLYKILGLLPTRNVVSTSLISHQRRSQFHWMERLKFRYPRL.

The polypeptide is F-box protein At3g55900 (Arabidopsis thaliana (Mouse-ear cress)).